The sequence spans 368 residues: Histidinol-phosphate aminotransferase (368 aa).

N6-(pyridoxal phosphate)lysine is present on Lys-223.

Belongs to the class-II pyridoxal-phosphate-dependent aminotransferase family. Histidinol-phosphate aminotransferase subfamily. As to quaternary structure, homodimer. It depends on pyridoxal 5'-phosphate as a cofactor.

The catalysed reaction is L-histidinol phosphate + 2-oxoglutarate = 3-(imidazol-4-yl)-2-oxopropyl phosphate + L-glutamate. It functions in the pathway amino-acid biosynthesis; L-histidine biosynthesis; L-histidine from 5-phospho-alpha-D-ribose 1-diphosphate: step 7/9. This chain is Histidinol-phosphate aminotransferase (hisC), found in Sinorhizobium fredii (strain NBRC 101917 / NGR234).